Here is a 423-residue protein sequence, read N- to C-terminus: UPF0229 protein Pfl01_5140 (423 aa).

Residues threonine 83 to glutamate 108 form a disordered region. Residues proline 92–glycine 107 are compositionally biased toward gly residues.

The protein belongs to the UPF0229 family.

This Pseudomonas fluorescens (strain Pf0-1) protein is UPF0229 protein Pfl01_5140.